The primary structure comprises 691 residues: MARDYKIEDYRNFGIMAHIDAGKTTTTERILYYTGKSHKIGEVHDGAATMDWMEQEQERGITITSAATTCFWNGKRLNIIDTPGHVDFTIEVERSLRVLDGAVCCLDANAGVEPQTETVWRQADRYKVPRMVFINKMDKLGADFFNCVKMIEDRLGATPLCVQLPIGSETEFEGVIDLIKMKELVWKGEGLGAEWEERDIRADLADKAAEYREALVETAVEQDEAAMEAYLEGEEPSEELLKSLIRKGCIALAFNPILCGTAFKNKGVQPLLDAVVDFLPNPTEVPAIKGIDFKTEEEVVRRASDDEPTSLLAFKIMNDPFVGSLTFARMYSGHLETGISLLNTVKDKKERIGRMLLMHSNSREDIKECFAGDIVAIAGLKDTTTGDTLCDPMKPVILERMEFPDPVIELAIEPKSKADQEKLGVALQRLAAEDPSFRMKTDEESGQTIIAGMGELHLDILVDRMKREFKVEANVGAPQVAYRESLSQKGLVDYTHKKQSGGSGQFARVKIEFGPGEPGSGFVFESKIVGGNVPKEYIPGVEKGLKSVMDGGLIAGFPVIDVHAMLVDGAYHDVDSSVLAFEIAARAAFREAKSHCAPKLLEPIMKVEVVTPDEYTGGVIGDLNSRRGQIAGQEMRGNATVVNAMVPLANMFGYVNNLRSATQGRAQFTMLFDHYEAVPKAVEQEVIAKSA.

A tr-type G domain is found at 8 to 283 (EDYRNFGIMA…AVVDFLPNPT (276 aa)). GTP contacts are provided by residues 17 to 24 (AHIDAGKT), 81 to 85 (DTPGH), and 135 to 138 (NKMD).

It belongs to the TRAFAC class translation factor GTPase superfamily. Classic translation factor GTPase family. EF-G/EF-2 subfamily.

The protein resides in the cytoplasm. Its function is as follows. Catalyzes the GTP-dependent ribosomal translocation step during translation elongation. During this step, the ribosome changes from the pre-translocational (PRE) to the post-translocational (POST) state as the newly formed A-site-bound peptidyl-tRNA and P-site-bound deacylated tRNA move to the P and E sites, respectively. Catalyzes the coordinated movement of the two tRNA molecules, the mRNA and conformational changes in the ribosome. This chain is Elongation factor G, found in Maricaulis maris (strain MCS10) (Caulobacter maris).